A 1432-amino-acid chain; its full sequence is DNA-directed RNA polymerase subunit beta (1432 aa).

It belongs to the RNA polymerase beta chain family. In terms of assembly, the RNAP catalytic core consists of 2 alpha, 1 beta, 1 beta' and 1 omega subunit. When a sigma factor is associated with the core the holoenzyme is formed, which can initiate transcription.

It carries out the reaction RNA(n) + a ribonucleoside 5'-triphosphate = RNA(n+1) + diphosphate. In terms of biological role, DNA-dependent RNA polymerase catalyzes the transcription of DNA into RNA using the four ribonucleoside triphosphates as substrates. This Solibacter usitatus (strain Ellin6076) protein is DNA-directed RNA polymerase subunit beta.